Reading from the N-terminus, the 48-residue chain is uncharacterized protein (48 aa).

It belongs to the ELIP/psbS family.

The protein resides in the plastid. It is found in the chloroplast. In terms of biological role, possible role in chlorophyll and/or carotenoid binding. This is an uncharacterized protein from Pyropia yezoensis (Susabi-nori).